We begin with the raw amino-acid sequence, 349 residues long: D-alanine--D-alanine ligase (349 aa).

Residues 132–335 enclose the ATP-grasp domain; that stretch reads KHVFEAVGVP…YSDLIEKLVD (204 aa). 162-217 lines the ATP pocket; that stretch reads VEKLDFPVFVKPANMGSSVGISKVDDLADLQPALSEAYKYDNRVVIEQGVDAREIE. Mg(2+)-binding residues include Asp-289, Glu-302, and Asn-304.

The protein belongs to the D-alanine--D-alanine ligase family. Mg(2+) serves as cofactor. Requires Mn(2+) as cofactor.

It is found in the cytoplasm. It catalyses the reaction 2 D-alanine + ATP = D-alanyl-D-alanine + ADP + phosphate + H(+). Its pathway is cell wall biogenesis; peptidoglycan biosynthesis. In terms of biological role, cell wall formation. This is D-alanine--D-alanine ligase from Lactococcus lactis subsp. cremoris (strain MG1363).